The sequence spans 231 residues: ATP-dependent dethiobiotin synthetase BioD (231 aa).

13 to 18 (DVGKTV) lines the ATP pocket. Position 17 (T17) interacts with Mg(2+). K38 is a catalytic residue. ATP-binding positions include D55, 116–119 (EGAG), and 176–177 (NR). D55 and E116 together coordinate Mg(2+).

The protein belongs to the dethiobiotin synthetase family. As to quaternary structure, homodimer. Mg(2+) serves as cofactor.

Its subcellular location is the cytoplasm. The enzyme catalyses (7R,8S)-7,8-diammoniononanoate + CO2 + ATP = (4R,5S)-dethiobiotin + ADP + phosphate + 3 H(+). It functions in the pathway cofactor biosynthesis; biotin biosynthesis; biotin from 7,8-diaminononanoate: step 1/2. Functionally, catalyzes a mechanistically unusual reaction, the ATP-dependent insertion of CO2 between the N7 and N8 nitrogen atoms of 7,8-diaminopelargonic acid (DAPA, also called 7,8-diammoniononanoate) to form a ureido ring. The sequence is that of ATP-dependent dethiobiotin synthetase BioD from Vibrio cholerae serotype O1 (strain ATCC 39315 / El Tor Inaba N16961).